We begin with the raw amino-acid sequence, 65 residues long: Small ribosomal subunit protein bS21A (65 aa).

This sequence belongs to the bacterial ribosomal protein bS21 family.

The sequence is that of Small ribosomal subunit protein bS21A from Francisella tularensis subsp. tularensis (strain FSC 198).